The chain runs to 392 residues: Aspartate aminotransferase (392 aa).

L-aspartate-binding residues include Gly-40, Trp-126, and Asn-176. Residue Lys-239 is modified to N6-(pyridoxal phosphate)lysine.

Belongs to the class-I pyridoxal-phosphate-dependent aminotransferase family. Homodimer. Pyridoxal 5'-phosphate serves as cofactor.

It is found in the cytoplasm. It carries out the reaction L-aspartate + 2-oxoglutarate = oxaloacetate + L-glutamate. The sequence is that of Aspartate aminotransferase from Bacillus sp. (strain YM-2).